The following is a 273-amino-acid chain: 2,3,4,5-tetrahydropyridine-2,6-dicarboxylate N-succinyltransferase (273 aa).

The protein belongs to the transferase hexapeptide repeat family.

It localises to the cytoplasm. It catalyses the reaction (S)-2,3,4,5-tetrahydrodipicolinate + succinyl-CoA + H2O = (S)-2-succinylamino-6-oxoheptanedioate + CoA. The protein operates within amino-acid biosynthesis; L-lysine biosynthesis via DAP pathway; LL-2,6-diaminopimelate from (S)-tetrahydrodipicolinate (succinylase route): step 1/3. The chain is 2,3,4,5-tetrahydropyridine-2,6-dicarboxylate N-succinyltransferase from Acinetobacter baumannii (strain SDF).